The sequence spans 61 residues: DNA-directed RNA polymerase subunit Rpo10 (61 aa).

Residues C6, C9, C42, and C43 each contribute to the Zn(2+) site.

This sequence belongs to the archaeal Rpo10/eukaryotic RPB10 RNA polymerase subunit family. Part of the RNA polymerase complex. Zn(2+) is required as a cofactor.

It localises to the cytoplasm. The enzyme catalyses RNA(n) + a ribonucleoside 5'-triphosphate = RNA(n+1) + diphosphate. Functionally, DNA-dependent RNA polymerase (RNAP) catalyzes the transcription of DNA into RNA using the four ribonucleoside triphosphates as substrates. The sequence is that of DNA-directed RNA polymerase subunit Rpo10 from Methanothrix thermoacetophila (strain DSM 6194 / JCM 14653 / NBRC 101360 / PT) (Methanosaeta thermophila).